Reading from the N-terminus, the 307-residue chain is Oxygen-dependent coproporphyrinogen-III oxidase (307 aa).

Residue Ser-99 participates in substrate binding. Residues His-103 and His-113 each contribute to the a divalent metal cation site. The active-site Proton donor is the His-113. A substrate-binding site is contributed by 115–117; the sequence is NVR. A divalent metal cation contacts are provided by His-152 and His-182. The tract at residues 247–282 is important for dimerization; it reads YVEFNLVFDRGTLFGLQSGGRTESILMSMPPVANWR. Substrate is bound at residue 265 to 267; sequence GGR.

The protein belongs to the aerobic coproporphyrinogen-III oxidase family. Homodimer. Requires a divalent metal cation as cofactor.

The protein localises to the cytoplasm. It catalyses the reaction coproporphyrinogen III + O2 + 2 H(+) = protoporphyrinogen IX + 2 CO2 + 2 H2O. Its pathway is porphyrin-containing compound metabolism; protoporphyrin-IX biosynthesis; protoporphyrinogen-IX from coproporphyrinogen-III (O2 route): step 1/1. In terms of biological role, involved in the heme biosynthesis. Catalyzes the aerobic oxidative decarboxylation of propionate groups of rings A and B of coproporphyrinogen-III to yield the vinyl groups in protoporphyrinogen-IX. In Burkholderia lata (strain ATCC 17760 / DSM 23089 / LMG 22485 / NCIMB 9086 / R18194 / 383), this protein is Oxygen-dependent coproporphyrinogen-III oxidase.